Here is a 440-residue protein sequence, read N- to C-terminus: Thymidine phosphorylase (440 aa).

It belongs to the thymidine/pyrimidine-nucleoside phosphorylase family. Homodimer.

The enzyme catalyses thymidine + phosphate = 2-deoxy-alpha-D-ribose 1-phosphate + thymine. It functions in the pathway pyrimidine metabolism; dTMP biosynthesis via salvage pathway; dTMP from thymine: step 1/2. In terms of biological role, the enzymes which catalyze the reversible phosphorolysis of pyrimidine nucleosides are involved in the degradation of these compounds and in their utilization as carbon and energy sources, or in the rescue of pyrimidine bases for nucleotide synthesis. The protein is Thymidine phosphorylase of Escherichia coli O127:H6 (strain E2348/69 / EPEC).